The chain runs to 572 residues: Urease subunit alpha (572 aa).

In terms of domain architecture, Urease spans 134-572 (AGIDSHIHLI…AAMNQRYFFG (439 aa)). Ni(2+) is bound by residues His139, His141, and Lys222. Lys222 is modified (N6-carboxylysine). Position 224 (His224) interacts with substrate. Ni(2+) is bound by residues His251 and His277. The active-site Proton donor is the His325. Asp365 is a Ni(2+) binding site.

It belongs to the metallo-dependent hydrolases superfamily. Urease alpha subunit family. In terms of assembly, heterotrimer of UreA (gamma), UreB (beta) and UreC (alpha) subunits. Three heterotrimers associate to form the active enzyme. Ni cation is required as a cofactor. Carboxylation allows a single lysine to coordinate two nickel ions.

It is found in the cytoplasm. The catalysed reaction is urea + 2 H2O + H(+) = hydrogencarbonate + 2 NH4(+). Its pathway is nitrogen metabolism; urea degradation; CO(2) and NH(3) from urea (urease route): step 1/1. The protein is Urease subunit alpha of Yersinia enterocolitica serotype O:8 / biotype 1B (strain NCTC 13174 / 8081).